Reading from the N-terminus, the 485-residue chain is Ribulose bisphosphate carboxylase large chain (485 aa).

Positions 1 to 2 (MS) are excised as a propeptide. The residue at position 3 (proline 3) is an N-acetylproline. Lysine 14 is modified (N6,N6,N6-trimethyllysine). Substrate contacts are provided by asparagine 123 and threonine 173. Lysine 175 serves as the catalytic Proton acceptor. Lysine 177 is a binding site for substrate. Positions 201, 203, and 204 each coordinate Mg(2+). Lysine 201 is modified (N6-carboxylysine). Histidine 294 functions as the Proton acceptor in the catalytic mechanism. Substrate-binding residues include arginine 295, histidine 327, and serine 379.

Belongs to the RuBisCO large chain family. Type I subfamily. As to quaternary structure, heterohexadecamer of 8 large chains and 8 small chains; disulfide-linked. The disulfide link is formed within the large subunit homodimers. It depends on Mg(2+) as a cofactor. Post-translationally, the disulfide bond which can form in the large chain dimeric partners within the hexadecamer appears to be associated with oxidative stress and protein turnover.

It is found in the plastid. The protein localises to the chloroplast. It carries out the reaction 2 (2R)-3-phosphoglycerate + 2 H(+) = D-ribulose 1,5-bisphosphate + CO2 + H2O. It catalyses the reaction D-ribulose 1,5-bisphosphate + O2 = 2-phosphoglycolate + (2R)-3-phosphoglycerate + 2 H(+). RuBisCO catalyzes two reactions: the carboxylation of D-ribulose 1,5-bisphosphate, the primary event in carbon dioxide fixation, as well as the oxidative fragmentation of the pentose substrate in the photorespiration process. Both reactions occur simultaneously and in competition at the same active site. The chain is Ribulose bisphosphate carboxylase large chain from Bartlettina sordida (Purple torch).